Consider the following 101-residue polypeptide: Small ribosomal subunit protein uS14 (101 aa).

Belongs to the universal ribosomal protein uS14 family. In terms of assembly, part of the 30S ribosomal subunit. Contacts proteins S3 and S10.

Its function is as follows. Binds 16S rRNA, required for the assembly of 30S particles and may also be responsible for determining the conformation of the 16S rRNA at the A site. In Kocuria rhizophila (strain ATCC 9341 / DSM 348 / NBRC 103217 / DC2201), this protein is Small ribosomal subunit protein uS14.